The sequence spans 205 residues: Ribonuclease HII (205 aa).

Residues 15 to 205 (SQVCGIDEAG…SFKLRKLGEK (191 aa)) form the RNase H type-2 domain. 3 residues coordinate a divalent metal cation: Asp21, Glu22, and Asp117.

It belongs to the RNase HII family. Mn(2+) is required as a cofactor. The cofactor is Mg(2+).

Its subcellular location is the cytoplasm. The catalysed reaction is Endonucleolytic cleavage to 5'-phosphomonoester.. Its function is as follows. Endonuclease that specifically degrades the RNA of RNA-DNA hybrids. In Chlorobaculum tepidum (strain ATCC 49652 / DSM 12025 / NBRC 103806 / TLS) (Chlorobium tepidum), this protein is Ribonuclease HII.